The sequence spans 419 residues: MDKNYNLPVDAELFPEGCERCSLSKFMMWMAFVFVFFGWGLYAAYRVLAEGLGVTGLDDYFGFGLWITFDLAVIALGAGAFFSGLLRYILNIDPLKNIINLAVIIGFLCYSGAMLVLVLDIGQPLRAWFGYWHANVHSMLTEVIFCITCYCLVLIIEYVPLILENRQLNKNKLVHAVAHNFHVMMPLFAGIGAFLSTFHQGSLGGMYGVLFGRPYIYREGFFIWPWTFFLYVLSAVGSGPVFTVLVCTLMEKMTGRKLVSWEVKSLMGKIAGTMLMVYLIFKFADTYAWAYDLLPRQGLTFDQMFTSGWIYGKWMLWAELFYCGLVPAIILIVPALRNNPVLFYSAAILDCIGITINRYVMTVQALAIPVMPFDSWESYLPNWAEWGASVMIVAYAALVLSLSYRYLPIFPQEAELNRK.

10 consecutive transmembrane segments (helical) span residues 23-43 (LSKFMMWMAFVFVFFGWGLYA), 61-81 (FGFGLWITFDLAVIALGAGAF), 98-118 (IINLAVIIGFLCYSGAMLVLV), 143-163 (VIFCITCYCLVLIIEYVPLIL), 176-196 (AVAHNFHVMMPLFAGIGAFLS), 221-241 (FFIWPWTFFLYVLSAVGSGPV), 270-290 (IAGTMLMVYLIFKFADTYAWA), 316-336 (LWAELFYCGLVPAIILIVPAL), 341-361 (VLFYSAAILDCIGITINRYVM), and 383-403 (WAEWGASVMIVAYAALVLSLS).

It belongs to the NrfD family. In terms of assembly, the Qrc complex is composed of four subunits: QrcA, QrcB, QrcC and QrcD. Can form a supercomplex with the [NiFe] hydrogenase HynA1 and the tetraheme Type I cytochrome c3 TpIc(3), its physiological electron donors.

Its subcellular location is the cell inner membrane. In terms of biological role, component of the respiratory Qrc complex, that catalyzes the reduction of the menaquinone pool using electrons transferred from the reduced periplasmic cytochrome c3, and which is probably involved in sulfate respiration. Is likely essential for growth on H(2) or formate since the periplasmic hydrogenases and/or formate dehydrogenases act as primary electron donors for the Qrc complex. The QrcD subunit anchors the protein complex to the membrane and likely interacts with the quinone pool. The protein is Menaquinone reductase, integral membrane subunit of Nitratidesulfovibrio vulgaris (strain ATCC 29579 / DSM 644 / CCUG 34227 / NCIMB 8303 / VKM B-1760 / Hildenborough) (Desulfovibrio vulgaris).